A 204-amino-acid chain; its full sequence is ATP phosphoribosyltransferase (204 aa).

The protein belongs to the ATP phosphoribosyltransferase family. Short subfamily. In terms of assembly, heteromultimer composed of HisG and HisZ subunits.

The protein resides in the cytoplasm. The enzyme catalyses 1-(5-phospho-beta-D-ribosyl)-ATP + diphosphate = 5-phospho-alpha-D-ribose 1-diphosphate + ATP. The protein operates within amino-acid biosynthesis; L-histidine biosynthesis; L-histidine from 5-phospho-alpha-D-ribose 1-diphosphate: step 1/9. Functionally, catalyzes the condensation of ATP and 5-phosphoribose 1-diphosphate to form N'-(5'-phosphoribosyl)-ATP (PR-ATP). Has a crucial role in the pathway because the rate of histidine biosynthesis seems to be controlled primarily by regulation of HisG enzymatic activity. The sequence is that of ATP phosphoribosyltransferase from Campylobacter concisus (strain 13826).